Here is a 71-residue protein sequence, read N- to C-terminus: MWYSFYTKLHRPVLLRHSLPPVVFGLLLRIDLPLRNRIFRRLKLFFLVFRRLFSWFLVLLPSPRFFSPITL.

A helical membrane pass occupies residues 44 to 66 (LFFLVFRRLFSWFLVLLPSPRFF).

It is found in the membrane. This is an uncharacterized protein from Saccharomyces cerevisiae (strain ATCC 204508 / S288c) (Baker's yeast).